Reading from the N-terminus, the 398-residue chain is Na(+)/H(+) antiporter NhaA (398 aa).

12 helical membrane-spanning segments follow: residues 8–28 (FLQL…LALI), 59–79 (LLLW…GMEI), 96–116 (LPVI…SFII), 124–144 (AGWA…LSLL), 154–174 (VFLL…IALF), 177–197 (AELH…LLML), 202–222 (VMLL…VLKS), 223–243 (GVHA…IRGA), 261–281 (YFIL…GLSW), 292–312 (IIVG…WLAV), 328–348 (LFGL…IGGL), and 362–382 (LGIL…LRNA).

It belongs to the NhaA Na(+)/H(+) (TC 2.A.33) antiporter family.

The protein resides in the cell inner membrane. The catalysed reaction is Na(+)(in) + 2 H(+)(out) = Na(+)(out) + 2 H(+)(in). In terms of biological role, na(+)/H(+) antiporter that extrudes sodium in exchange for external protons. This chain is Na(+)/H(+) antiporter NhaA, found in Tolumonas auensis (strain DSM 9187 / NBRC 110442 / TA 4).